The chain runs to 312 residues: Ribose-phosphate pyrophosphokinase (312 aa).

ATP contacts are provided by residues 34–36 and 93–94; these read DLE and RQ. Mg(2+) is bound by residues histidine 127 and aspartate 168. Lysine 192 is a catalytic residue. Residues arginine 194, aspartate 218, and 222 to 226 contribute to the D-ribose 5-phosphate site; that span reads DSAGT.

It belongs to the ribose-phosphate pyrophosphokinase family. Class I subfamily. Homohexamer. Mg(2+) is required as a cofactor.

It localises to the cytoplasm. It catalyses the reaction D-ribose 5-phosphate + ATP = 5-phospho-alpha-D-ribose 1-diphosphate + AMP + H(+). It functions in the pathway metabolic intermediate biosynthesis; 5-phospho-alpha-D-ribose 1-diphosphate biosynthesis; 5-phospho-alpha-D-ribose 1-diphosphate from D-ribose 5-phosphate (route I): step 1/1. Involved in the biosynthesis of the central metabolite phospho-alpha-D-ribosyl-1-pyrophosphate (PRPP) via the transfer of pyrophosphoryl group from ATP to 1-hydroxyl of ribose-5-phosphate (Rib-5-P). This is Ribose-phosphate pyrophosphokinase from Caulobacter vibrioides (strain ATCC 19089 / CIP 103742 / CB 15) (Caulobacter crescentus).